Consider the following 163-residue polypeptide: ATP synthase subunit b, sodium ion specific (163 aa).

The helical transmembrane segment at 9–29 (VSIDINMFWQIINFLILMFFF) threads the bilayer.

It belongs to the ATPase B chain family. F-type ATPases have 2 components, F(1) - the catalytic core - and F(0) - the membrane proton channel. F(1) has five subunits: alpha(3), beta(3), gamma(1), delta(1), epsilon(1). F(0) has three main subunits: a(1), b(2) and c(10-14). The alpha and beta chains form an alternating ring which encloses part of the gamma chain. F(1) is attached to F(0) by a central stalk formed by the gamma and epsilon chains, while a peripheral stalk is formed by the delta and b chains.

The protein localises to the cell inner membrane. Functionally, f(1)F(0) ATP synthase produces ATP from ADP in the presence of a proton or sodium gradient. F-type ATPases consist of two structural domains, F(1) containing the extramembraneous catalytic core and F(0) containing the membrane proton channel, linked together by a central stalk and a peripheral stalk. During catalysis, ATP synthesis in the catalytic domain of F(1) is coupled via a rotary mechanism of the central stalk subunits to proton translocation. Component of the F(0) channel, it forms part of the peripheral stalk, linking F(1) to F(0). In Ilyobacter tartaricus, this protein is ATP synthase subunit b, sodium ion specific (atpF).